We begin with the raw amino-acid sequence, 521 residues long: Glucose-6-phosphate isomerase (521 aa).

Residue Glu351 is the Proton donor of the active site. Catalysis depends on residues His382 and Lys491.

Belongs to the GPI family.

It is found in the cytoplasm. It carries out the reaction alpha-D-glucose 6-phosphate = beta-D-fructose 6-phosphate. Its pathway is carbohydrate biosynthesis; gluconeogenesis. The protein operates within carbohydrate degradation; glycolysis; D-glyceraldehyde 3-phosphate and glycerone phosphate from D-glucose: step 2/4. Its function is as follows. Catalyzes the reversible isomerization of glucose-6-phosphate to fructose-6-phosphate. The protein is Glucose-6-phosphate isomerase of Polaromonas naphthalenivorans (strain CJ2).